Here is a 1008-residue protein sequence, read N- to C-terminus: Probable transport protein MmpL10 (1008 aa).

12 consecutive transmembrane segments (helical) span residues 23–43, 202–222, 225–245, 257–277, 301–321, 340–360, 389–409, 835–855, 862–882, 895–915, 940–960, and 961–981; these read WPWV…MTVP, IELV…RNPI, LLPL…VSGV, MIVL…VFLI, ALIS…ITFL, IGIA…LVLA, VAYL…ASLV, DLQL…MALL, IYLV…CVLV, VPGL…MLLA, VITA…LSSI, and ATVV…TFIV.

Belongs to the resistance-nodulation-cell division (RND) (TC 2.A.6) family. MmpL subfamily.

Its subcellular location is the cell membrane. In Mycobacterium leprae (strain TN), this protein is Probable transport protein MmpL10 (mmpL10).